The sequence spans 359 residues: Protein disulfide-isomerase C17H9.14c (359 aa).

An N-terminal signal peptide occupies residues M1–A19. 2 Thioredoxin domains span residues S20–G130 and R134–G250. Catalysis depends on nucleophile residues C51 and C54. Cystine bridges form between C51/C54 and C170/C173.

The protein belongs to the protein disulfide isomerase family.

It catalyses the reaction Catalyzes the rearrangement of -S-S- bonds in proteins.. In terms of biological role, participates in the folding of proteins containing disulfide bonds, may be involved in glycosylation, prolyl hydroxylation and triglyceride transfer. The chain is Protein disulfide-isomerase C17H9.14c from Schizosaccharomyces pombe (strain 972 / ATCC 24843) (Fission yeast).